Here is a 227-residue protein sequence, read N- to C-terminus: Phosphoribosylformylglycinamidine synthase subunit PurQ (227 aa).

The 223-residue stretch at Phe3–Val225 folds into the Glutamine amidotransferase type-1 domain. Cys86 functions as the Nucleophile in the catalytic mechanism. Residues His194 and Glu196 contribute to the active site.

As to quaternary structure, part of the FGAM synthase complex composed of 1 PurL, 1 PurQ and 2 PurS subunits.

The protein localises to the cytoplasm. It carries out the reaction N(2)-formyl-N(1)-(5-phospho-beta-D-ribosyl)glycinamide + L-glutamine + ATP + H2O = 2-formamido-N(1)-(5-O-phospho-beta-D-ribosyl)acetamidine + L-glutamate + ADP + phosphate + H(+). The catalysed reaction is L-glutamine + H2O = L-glutamate + NH4(+). It participates in purine metabolism; IMP biosynthesis via de novo pathway; 5-amino-1-(5-phospho-D-ribosyl)imidazole from N(2)-formyl-N(1)-(5-phospho-D-ribosyl)glycinamide: step 1/2. Part of the phosphoribosylformylglycinamidine synthase complex involved in the purines biosynthetic pathway. Catalyzes the ATP-dependent conversion of formylglycinamide ribonucleotide (FGAR) and glutamine to yield formylglycinamidine ribonucleotide (FGAM) and glutamate. The FGAM synthase complex is composed of three subunits. PurQ produces an ammonia molecule by converting glutamine to glutamate. PurL transfers the ammonia molecule to FGAR to form FGAM in an ATP-dependent manner. PurS interacts with PurQ and PurL and is thought to assist in the transfer of the ammonia molecule from PurQ to PurL. The polypeptide is Phosphoribosylformylglycinamidine synthase subunit PurQ (Bacillus anthracis (strain A0248)).